Consider the following 979-residue polypeptide: METGSPGKRPVLPKRARLLVTAGMGMLALLLFGPRLVDIYVDWLWFGEVGFRSVWITVLLTRLAIVAAVALVVAGIVLAALLLAYRSRPFFVPDEPQRDPVAPLRSAVMRRPRLFGWGIAVTLGVVCGLIASFDWVKVQLFVHGGTFGIVDPEFGYDIGFFVFDLPFYRSVLNWLFVAVVLAFLASLLTHYLFGGLRLTTGRGMLTQAARVQLAVFAGAVVLLKAVAYWLDRYELLSSGRKEPTFTGAGYTDIHAELPAKLVLVAIAVLCAVSFFTAIFLRDLRIPAMAAALLVLSAILVGGLWPLLMEQFSVRPNAADVERPYIQRNIEATREAYRIGGDWVQYRSYPGIGTKQPRDVPVDVTTIAKVRLLDPHILSRTFTQQQQLKNFFSFAEILDIDRYRIDGELQDYIVGVRELSPKSLTGNQTDWINKHTVYTHGNGFVAAPANRVNAAARDAENISDSNSGYPIYAVSDIASLGSGRQVIPVEQPRVYYGEVIAQADPDYAIVGGAPGSAPREYDTDTSKYTYTGAGGVSIGNWFNRTVFATKFAQHKFLFSREIGSESKVLIHRDPKERVQRVAPWLTTDDNPYPVVVNGRIVWIVDAYTTLDTYPYAQRSSLEGPVTSPTGIVRQGKQVSYVRNSVKATVDAYDGTVTLFQFDRDDPVLRTWMRAFPGTVKSEDQIPDELRAHFRYPEDLFEVQRSLLAKYHVDEPREFFTTNAFWSVPSDPTNDANATQPPFYVLVGDQQSAQPSFRLASAMVGYNREFLSAYISAHSDPANYGKLTVLELPTDTLTQGPQQIQNSMISDTRVASERTLLERSNRIHYGNLLSLPIADGGVLYVEPLYTERISTSPSSSTFPQLSRVLVSVREPRTEGGVRVGYAPTLAESLDQVFGPGTGRVATAPGGDAASAPPPGAGGPAPPQAVPPPRTTQPPAAPPRGPDVPPATVAELRETLADLRAVLDRLEKAIDAAETPGG.

Helical transmembrane passes span 19 to 39 (LVTAGMGMLALLLFGPRLVDI), 63 to 83 (LAIVAAVALVVAGIVLAALLL), 114 to 134 (LFGWGIAVTLGVVCGLIASFD), 174 to 194 (WLFVAVVLAFLASLLTHYLFG), 211 to 231 (VQLAVFAGAVVLLKAVAYWLD), 260 to 280 (KLVLVAIAVLCAVSFFTAIFL), and 288 to 308 (MAAALLVLSAILVGGLWPLLM). Residues 898–948 (GTGRVATAPGGDAASAPPPGAGGPAPPQAVPPPRTTQPPAAPPRGPDVPPA) form a disordered region. Residues 902–912 (VATAPGGDAAS) show a composition bias toward low complexity. A compositionally biased stretch (pro residues) spans 913–946 (APPPGAGGPAPPQAVPPPRTTQPPAAPPRGPDVP).

It belongs to the UPF0182 family.

Its subcellular location is the cell membrane. In Mycobacterium bovis (strain BCG / Pasteur 1173P2), this protein is UPF0182 protein BCG_0095.